Here is a 310-residue protein sequence, read N- to C-terminus: MKILLANPRGFCAGVDRAITIVKNALHKFGAPVYVRHEVVHNKYVVDELKAMGAIFVDELDEIPDGNTVIFSAHGVPKRVREEARKRGLQVFDATCPLVTKVHMEVHRASRKGQEVVLIGHKGHPEVEGTLGQYDENGTGMYLVEDANQVDSLPVQQPEKVSFVTQTTLSVDETRDIIDALREHFPAIQGPRKDDICYATQNRQDAVRALAPQVDVMLVVGSKNSSNSNRLRELAERLGTRAYLLDDASQLQDEWFTNVNSVGVTAGASAPEVLVQSVIDRLYQLGGSKLEQMDGVIEDTVFEVPVELRV.

Cys-12 is a [4Fe-4S] cluster binding site. 2 residues coordinate (2E)-4-hydroxy-3-methylbut-2-enyl diphosphate: His-41 and His-74. The dimethylallyl diphosphate site is built by His-41 and His-74. Isopentenyl diphosphate-binding residues include His-41 and His-74. Cys-96 serves as a coordination point for [4Fe-4S] cluster. His-124 contributes to the (2E)-4-hydroxy-3-methylbut-2-enyl diphosphate binding site. A dimethylallyl diphosphate-binding site is contributed by His-124. Residue His-124 participates in isopentenyl diphosphate binding. Glu-126 functions as the Proton donor in the catalytic mechanism. Residue Thr-167 participates in (2E)-4-hydroxy-3-methylbut-2-enyl diphosphate binding. Cys-197 contributes to the [4Fe-4S] cluster binding site. The (2E)-4-hydroxy-3-methylbut-2-enyl diphosphate site is built by Ser-225, Ser-226, Asn-227, and Ser-269. Dimethylallyl diphosphate is bound by residues Ser-225, Ser-226, Asn-227, and Ser-269. Residues Ser-225, Ser-226, Asn-227, and Ser-269 each contribute to the isopentenyl diphosphate site.

Belongs to the IspH family. [4Fe-4S] cluster serves as cofactor.

The enzyme catalyses isopentenyl diphosphate + 2 oxidized [2Fe-2S]-[ferredoxin] + H2O = (2E)-4-hydroxy-3-methylbut-2-enyl diphosphate + 2 reduced [2Fe-2S]-[ferredoxin] + 2 H(+). The catalysed reaction is dimethylallyl diphosphate + 2 oxidized [2Fe-2S]-[ferredoxin] + H2O = (2E)-4-hydroxy-3-methylbut-2-enyl diphosphate + 2 reduced [2Fe-2S]-[ferredoxin] + 2 H(+). The protein operates within isoprenoid biosynthesis; dimethylallyl diphosphate biosynthesis; dimethylallyl diphosphate from (2E)-4-hydroxy-3-methylbutenyl diphosphate: step 1/1. It participates in isoprenoid biosynthesis; isopentenyl diphosphate biosynthesis via DXP pathway; isopentenyl diphosphate from 1-deoxy-D-xylulose 5-phosphate: step 6/6. In terms of biological role, catalyzes the conversion of 1-hydroxy-2-methyl-2-(E)-butenyl 4-diphosphate (HMBPP) into a mixture of isopentenyl diphosphate (IPP) and dimethylallyl diphosphate (DMAPP). Acts in the terminal step of the DOXP/MEP pathway for isoprenoid precursor biosynthesis. The polypeptide is 4-hydroxy-3-methylbut-2-enyl diphosphate reductase (Tolumonas auensis (strain DSM 9187 / NBRC 110442 / TA 4)).